The primary structure comprises 1187 residues: RNA helicase Mov10l1 (1187 aa).

Residues 273 to 347 (RSKSCPGAAA…EPEPGGLIPP (75 aa)) form a disordered region. 2 stretches are compositionally biased toward basic and acidic residues: residues 296–307 (HHREDKTDEIPE) and 322–339 (ACKE…KQEP). 5 tandem repeats follow at residues 642–652 (TRNDSQSITNI), 653–663 (IRNDGQSITNV), 664–674 (TRNDGQPITKV), 675–685 (TRNNSQSITNI), and 686–696 (TRNDGQPITKN). The interval 642-696 (TRNDSQSITNIIRNDGQSITNVTRNDGQPITKVTRNNSQSITNITRNDGQPITKN) is 5 X 11 AA tandem repeats of [TI]-R-N-[DN]-[GS]-Q-[SP]-I-T-[NK]-[IVN]. Residues 686-727 (TRNDGQPITKNKKTVKDQTKHTTEERHVGTTDQPEKASSTAE) form a disordered region. Over residues 699–720 (TVKDQTKHTTEERHVGTTDQPE) the composition is skewed to basic and acidic residues. 772–779 (GPPGTGKT) contacts ATP. Residues 888–891 (DEAG) carry the DEAG box motif.

Belongs to the DNA2/NAM7 helicase family. SDE3 subfamily. Interacts with PIWIL1. Interacts with PIWIL2. Interacts with PIWIL4. Interacts with HSPA2. Interacts with PLD6. In terms of tissue distribution, isoform 1: Specifically expressed in testis. Isoform 1: In testis, present in pachytene spermatocytes but absent in postmeiotic spermatids (at protein level). Isoform 2: Present in cardiomyocytes (at protein level). Isoform 2: Heart specific. Isoform 3: Heart specific and is specifically expressed in cardiac myocytes.

The protein localises to the cytoplasm. The enzyme catalyses ATP + H2O = ADP + phosphate + H(+). ATP-dependent RNA helicase required during spermatogenesis to repress transposable elements and prevent their mobilization, which is essential for germline integrity. Acts via the piRNA metabolic process, which mediates the repression of transposable elements during meiosis by forming complexes composed of piRNAs and Piwi proteins and governs the methylation and subsequent repression of transposons. Involved in the primary piRNA metabolic process. Specifically binds to piRNA precursors and promotes the generation of intermediate piRNA processing fragments that are subsequently loaded to Piwi proteins. Acts via its ATP-dependent RNA helicase activity: displays 5'-3' RNA unwinding activity and probably mediates unwinding and funneling of single-stranded piRNA precursor transcripts to the endonuclease that catalyzes the first cleavage step of piRNA processing to generate piRNA intermediate fragments that are subsequently loaded to Piwi proteins. In terms of biological role, may act downstream of MEF2C during heart formation. Acts as a cardiac-specific suppressor of cardiomyocyte hypertrophy and cell cycle progression, suggesting that it may suppress these processes through the regulation of CDKN1A. Such results however require additional evidence. This Mus musculus (Mouse) protein is RNA helicase Mov10l1.